The following is a 141-amino-acid chain: Large ribosomal subunit protein uL11 (141 aa).

This sequence belongs to the universal ribosomal protein uL11 family. Part of the ribosomal stalk of the 50S ribosomal subunit. Interacts with L10 and the large rRNA to form the base of the stalk. L10 forms an elongated spine to which L12 dimers bind in a sequential fashion forming a multimeric L10(L12)X complex. One or more lysine residues are methylated.

Forms part of the ribosomal stalk which helps the ribosome interact with GTP-bound translation factors. In Geobacillus thermodenitrificans (strain NG80-2), this protein is Large ribosomal subunit protein uL11.